The sequence spans 362 residues: tRNA-specific 2-thiouridylase MnmA (362 aa).

Residues 13–20 (GLSGGVDS) and methionine 39 contribute to the ATP site. The tract at residues 99–101 (NPD) is interaction with target base in tRNA. The active-site Nucleophile is cysteine 104. Cysteine 104 and cysteine 200 are oxidised to a cystine. ATP is bound at residue glycine 128. The tract at residues 150–152 (KDQ) is interaction with tRNA. Cysteine 200 acts as the Cysteine persulfide intermediate in catalysis.

The protein belongs to the MnmA/TRMU family.

It is found in the cytoplasm. The catalysed reaction is S-sulfanyl-L-cysteinyl-[protein] + uridine(34) in tRNA + AH2 + ATP = 2-thiouridine(34) in tRNA + L-cysteinyl-[protein] + A + AMP + diphosphate + H(+). Catalyzes the 2-thiolation of uridine at the wobble position (U34) of tRNA, leading to the formation of s(2)U34. In Coxiella burnetii (strain RSA 493 / Nine Mile phase I), this protein is tRNA-specific 2-thiouridylase MnmA.